Here is a 427-residue protein sequence, read N- to C-terminus: Peptidase B (427 aa).

Mn(2+)-binding residues include lysine 195 and aspartate 200. Lysine 207 is an active-site residue. Mn(2+) contacts are provided by aspartate 218, aspartate 277, and glutamate 279. The active site involves arginine 281.

It belongs to the peptidase M17 family. As to quaternary structure, homohexamer. Requires Mn(2+) as cofactor.

It is found in the cytoplasm. The enzyme catalyses Release of an N-terminal amino acid, Xaa, from a peptide or arylamide. Xaa is preferably Glu or Asp but may be other amino acids, including Leu, Met, His, Cys and Gln.. Probably plays an important role in intracellular peptide degradation. This is Peptidase B from Escherichia coli O7:K1 (strain IAI39 / ExPEC).